The chain runs to 497 residues: Acetyl-coenzyme A carboxylase carboxyl transferase subunit beta, chloroplastic (497 aa).

A CoA carboxyltransferase N-terminal domain is found at 225-497 (LWVQCENCYG…LHGFLPLNQD (273 aa)). Zn(2+) is bound by residues cysteine 229, cysteine 232, cysteine 248, and cysteine 251. A C4-type zinc finger spans residues 229–251 (CENCYGLNYKKFFSSKMNICEYC).

This sequence belongs to the AccD/PCCB family. In terms of assembly, acetyl-CoA carboxylase is a heterohexamer composed of biotin carboxyl carrier protein, biotin carboxylase and 2 subunits each of ACCase subunit alpha and ACCase plastid-coded subunit beta (accD). The cofactor is Zn(2+).

It is found in the plastid. The protein localises to the chloroplast stroma. It carries out the reaction N(6)-carboxybiotinyl-L-lysyl-[protein] + acetyl-CoA = N(6)-biotinyl-L-lysyl-[protein] + malonyl-CoA. Its pathway is lipid metabolism; malonyl-CoA biosynthesis; malonyl-CoA from acetyl-CoA: step 1/1. Functionally, component of the acetyl coenzyme A carboxylase (ACC) complex. Biotin carboxylase (BC) catalyzes the carboxylation of biotin on its carrier protein (BCCP) and then the CO(2) group is transferred by the transcarboxylase to acetyl-CoA to form malonyl-CoA. The chain is Acetyl-coenzyme A carboxylase carboxyl transferase subunit beta, chloroplastic from Phalaenopsis aphrodite subsp. formosana (Moth orchid).